A 204-amino-acid polypeptide reads, in one-letter code: Prephenate decarboxylase (204 aa).

This sequence belongs to the prephenate decarboxylase family.

Its subcellular location is the cytoplasm. The catalysed reaction is prephenate + H(+) = 3-[(4R)-4-hydroxycyclohexa-1,5-dien-1-yl]-2-oxopropanoate + CO2. It participates in antibiotic biosynthesis; bacilysin biosynthesis. Its function is as follows. Part of the bacABCDEF operon responsible for the biosynthesis of the nonribosomally synthesized dipeptide antibiotic bacilysin, composed of L-alanine and L-anticapsin. Bacilysin is an irreversible inactivator of the glutaminase domain of glucosamine synthetase. BacA is an unusual prephenate decarboxylase that avoids the typical aromatization of the cyclohexadienol ring of prephenate. BacA catalyzes the protonation of prephenate (1-carboxy-4-hydroxy-alpha-oxo-2,5-cyclohexadiene-1-propanoic acid) at C6 position, followed by a decarboxylation to produce the endocyclic-delta(4),delta(8)-7R-dihydro-hydroxyphenylpyruvate (en-H2HPP). En-H2HPP is able to undergo a slow nonenzymatic isomerization to produce the exocyclic-delta(3),delta(5)-dihydro-hydroxyphenylpyruvate (ex-H2HPP). BacA isomerizes only the pro-R double bond in prephenate. The chain is Prephenate decarboxylase from Bacillus amyloliquefaciens (Bacillus velezensis).